Consider the following 450-residue polypeptide: MREIVHIQAGQCGNQIGAKFWEVISDEHGIDPSGNYVGDSDLQLERISVYYNEASSHKYVPRAILVDLEPGTMDSVRSGAFGHLFRPDNFIFGQSGAGNNWAKGHYTEGAELVDSVLDVVRKECENCDCLQGFQLTHSLGGGTGSGMGTLLISKVREEYPDRIMNTFSVVPSPKVSDTVVEPYNATLSIHQLVENTDETYCIDNEALYDICFRTLKLATPTYGDLNHLVSATMSGVTTSLRFPGQLNADLRKLAVNMVPFPRLHFFMPGFAPLTARGSQQYRALTVPELTQQMFDAKNMMAACDPRHGRYLTVATVFRGRMSMKEVDEQMLAIQSKNSSYFVEWIPNNVKVAVCDIPPRGLKMSSTFIGNSTAIQELFKRISEQFTAMFRRKAFLHWYTGEGMDEMEFTEAESNMNDLVSEYQQYQDATAEEEGEMYEDDEEESEAQGPK.

Positions 1–4 (MREI) match the MREI motif motif. Glycine 10, glutamine 11, cysteine 12, and glutamine 15 together coordinate GDP. Glutamine 11 is a binding site for GTP. Glutamate 69 lines the GTP pocket. Glutamate 69 is a binding site for Mg(2+). The GDP site is built by asparagine 99, serine 138, glycine 142, threonine 143, and glycine 144. Residues serine 138, glycine 142, threonine 143, and glycine 144 each contribute to the GTP site. Serine 172 is subject to Phosphoserine; by CDK1. Positions 177, 204, 222, and 226 each coordinate GDP. Position 204 (asparagine 204) interacts with GTP. Position 226 (asparagine 226) interacts with GTP. Positions 425–450 (YQDATAEEEGEMYEDDEEESEAQGPK) are disordered. The segment covering 429-450 (TAEEEGEMYEDDEEESEAQGPK) has biased composition (acidic residues). Glutamate 438 carries the 5-glutamyl polyglutamate modification. Phosphoserine is present on serine 444.

This sequence belongs to the tubulin family. As to quaternary structure, heterodimer of alpha- and beta-tubulin. A typical microtubule is a hollow water-filled tube with an outer diameter of 25 nm and an inner diameter of 15 nM. Alpha-beta heterodimers associate head-to-tail to form protofilaments running lengthwise along the microtubule wall with the beta-tubulin subunit facing the microtubule plus end conferring a structural polarity. Microtubules usually have 13 protofilaments but different protofilament numbers can be found in some organisms and specialized cells. Interacts with gamma-tubulin; the interaction allows microtubules to nucleate from the gamma-tubulin ring complex (gTuRC). Interacts with UNC5C (via cytoplasmic domain); this interaction is decreased by NTN1/Netrin-1. Interacts with NLRP5/MATER at cytoskeleton microtubules. Interacts with DPYSL5. Interacts with CFAP61. Requires Mg(2+) as cofactor. Some glutamate residues at the C-terminus are polyglutamylated, resulting in polyglutamate chains on the gamma-carboxyl group. Polyglutamylation plays a key role in microtubule severing by spastin (SPAST). SPAST preferentially recognizes and acts on microtubules decorated with short polyglutamate tails: severing activity by SPAST increases as the number of glutamates per tubulin rises from one to eight, but decreases beyond this glutamylation threshold. Glutamylation is also involved in cilia motility. Post-translationally, some glutamate residues at the C-terminus are monoglycylated but not polyglycylated due to the absence of functional TTLL10 in human. Monoglycylation is mainly limited to tubulin incorporated into cilia and flagella axonemes, which is required for their stability and maintenance. Flagella glycylation controls sperm motility. Both polyglutamylation and monoglycylation can coexist on the same protein on adjacent residues, and lowering glycylation levels increases polyglutamylation, and reciprocally. In terms of processing, phosphorylated on Ser-172 by CDK1 during the cell cycle, from metaphase to telophase, but not in interphase. This phosphorylation inhibits tubulin incorporation into microtubules. In terms of tissue distribution, expression is primarily restricted to central and peripheral nervous system. Greatly increased expression in most cancerous tissues.

Its subcellular location is the cytoplasm. The protein resides in the cytoskeleton. It localises to the cell projection. The protein localises to the growth cone. It is found in the lamellipodium. Its subcellular location is the filopodium. In terms of biological role, tubulin is the major constituent of microtubules, protein filaments consisting of alpha- and beta-tubulin heterodimers. Microtubules grow by the addition of GTP-tubulin dimers to the microtubule end, where a stabilizing cap forms. Below the cap, alpha-beta tubulin heterodimers are in GDP-bound state, owing to GTPase activity of alpha-tubulin. TUBB3 plays a critical role in proper axon guidance and maintenance. Binding of NTN1/Netrin-1 to its receptor UNC5C might cause dissociation of UNC5C from polymerized TUBB3 in microtubules and thereby lead to increased microtubule dynamics and axon repulsion. Plays a role in dorsal root ganglion axon projection towards the spinal cord. The chain is Tubulin beta-3 chain (TUBB3) from Homo sapiens (Human).